The chain runs to 314 residues: ATP synthase gamma chain (314 aa).

Belongs to the ATPase gamma chain family. As to quaternary structure, F-type ATPases have 2 components, CF(1) - the catalytic core - and CF(0) - the membrane proton channel. CF(1) has five subunits: alpha(3), beta(3), gamma(1), delta(1), epsilon(1). CF(0) has three main subunits: a, b and c.

The protein resides in the cell membrane. Produces ATP from ADP in the presence of a proton gradient across the membrane. The gamma chain is believed to be important in regulating ATPase activity and the flow of protons through the CF(0) complex. The protein is ATP synthase gamma chain of Lactiplantibacillus plantarum (strain ATCC BAA-793 / NCIMB 8826 / WCFS1) (Lactobacillus plantarum).